The chain runs to 80 residues: RNA-binding protein Hfq (80 aa).

One can recognise a Sm domain in the interval 9–69; it reads DVFLNQVRKE…VSTISPNSPV (61 aa).

It belongs to the Hfq family. As to quaternary structure, homohexamer.

In terms of biological role, RNA chaperone that binds small regulatory RNA (sRNAs) and mRNAs to facilitate mRNA translational regulation in response to envelope stress, environmental stress and changes in metabolite concentrations. Also binds with high specificity to tRNAs. This is RNA-binding protein Hfq from Alkaliphilus oremlandii (strain OhILAs) (Clostridium oremlandii (strain OhILAs)).